A 194-amino-acid chain; its full sequence is Ion-translocating oxidoreductase complex subunit A (194 aa).

A run of 6 helical transmembrane segments spans residues 4 to 24 (LALILVSAILVNNFVLVQFLG), 39 to 59 (IGLSLATTFVLTLAAMCSHIL), 72 to 92 (LRTIGFILVIAVVVQFTEMLV), 102 to 122 (VLGIFLPLITTNCIVLGVALL), 135 to 155 (TTQGFGAGLGFSLVLVLFAAL), and 172 to 192 (AIGMITAGLMSLAFMGFSGLV).

The protein belongs to the NqrDE/RnfAE family. In terms of assembly, the complex is composed of six subunits: RnfA, RnfB, RnfC, RnfD, RnfE and RnfG.

The protein resides in the cell inner membrane. Part of a membrane-bound complex that couples electron transfer with translocation of ions across the membrane. The protein is Ion-translocating oxidoreductase complex subunit A of Pseudomonas aeruginosa (strain LESB58).